The primary structure comprises 1379 residues: DNA-directed RNA polymerase subunit beta'' (1379 aa).

4 residues coordinate Zn(2+): Cys-220, Cys-293, Cys-300, and Cys-303.

Belongs to the RNA polymerase beta' chain family. RpoC2 subfamily. As to quaternary structure, in plastids the minimal PEP RNA polymerase catalytic core is composed of four subunits: alpha, beta, beta', and beta''. When a (nuclear-encoded) sigma factor is associated with the core the holoenzyme is formed, which can initiate transcription. Requires Zn(2+) as cofactor.

It localises to the plastid. The protein localises to the chloroplast. It carries out the reaction RNA(n) + a ribonucleoside 5'-triphosphate = RNA(n+1) + diphosphate. In terms of biological role, DNA-dependent RNA polymerase catalyzes the transcription of DNA into RNA using the four ribonucleoside triphosphates as substrates. The polypeptide is DNA-directed RNA polymerase subunit beta'' (Barbarea verna (Land cress)).